Consider the following 1410-residue polypeptide: Non-secreted LysM effector LysM15 (1410 aa).

LysM domains follow at residues 1179 to 1225 and 1231 to 1277; these read TTYT…DICM and TQYT…EILG. Residues 1291 to 1303 show a composition bias toward low complexity; it reads TTGDGITTTPGNG. The disordered stretch occupies residues 1291–1317; the sequence is TTGDGITTTPGNGEYAQGVVSPPENST. The LysM 3 domain occupies 1328–1375; the sequence is RWYSATADDLCVQICLKSGVSAKLFKAANPSLAADCDNSLIAGDAYCV.

This sequence belongs to the secreted LysM effector family.

Its function is as follows. Non-secreted LysM effector that might be involved in manipulation of host defenses for successful infection. This chain is Non-secreted LysM effector LysM15, found in Penicillium expansum (Blue mold rot fungus).